Here is a 260-residue protein sequence, read N- to C-terminus: Centromere protein K (260 aa).

Residues E84–F173 adopt a coiled-coil conformation.

It belongs to the CENP-K/MCM22 family. In terms of assembly, component of the CENPA-HI complex, at least composed of CENPH, CENPI, CENPK, CENPL, CENPM, CENPO and CENPP.

Its subcellular location is the nucleus. The protein localises to the chromosome. It localises to the centromere. The protein resides in the kinetochore. In terms of biological role, component of the CENPA-HI complex, a centromeric complex involved in assembly of kinetochore proteins, mitotic progression and chromosome segregation. The chain is Centromere protein K (CENPK) from Gallus gallus (Chicken).